Here is a 299-residue protein sequence, read N- to C-terminus: MTEFRSGFVCLVGRPNTGKSTLTNALVGTKVAITSMRPQTTRHTIRGIVHRDDFQIILVDTPGLHRPRTLLGKRLNDLVRDTYAEVDVIGLCIPADEAIGPGDRWIVEQIRATAPKTTLVAIVTKIDKVPKDRVAAQLVAVSELVGDSAEIVPVSAVTGAQVDIVIDVLAAALPPGPAYYPDGELTDEPEEVLMAELIREAALEGVRDELPHSLAVVIDEVNPREDRDDLIDVHALLYVERDSQKGIIIGKGGARLREVGTAARAQIEKLLGTKVYLDLRVKVAKNWQSDPKQLGRLGF.

The region spanning 5-175 is the Era-type G domain; it reads RSGFVCLVGR…IDVLAAALPP (171 aa). The segment at 13–20 is G1; that stretch reads GRPNTGKS. 13 to 20 is a GTP binding site; sequence GRPNTGKS. Positions 39 to 43 are G2; sequence QTTRH. Residues 60–63 form a G3 region; it reads DTPG. GTP is bound by residues 60–64 and 124–127; these read DTPGL and TKID. The tract at residues 124-127 is G4; that stretch reads TKID. The interval 154–156 is G5; it reads VSA. The 80-residue stretch at 206–285 folds into the KH type-2 domain; the sequence is VRDELPHSLA…YLDLRVKVAK (80 aa).

This sequence belongs to the TRAFAC class TrmE-Era-EngA-EngB-Septin-like GTPase superfamily. Era GTPase family. Monomer.

It localises to the cell envelope. The protein resides in the secreted. It is found in the cell wall. Functionally, exhibits GTPase activity. Binds RNA but is probably not involved in ribosome assembly in mycobacteria. This chain is GTPase Era, found in Mycobacterium avium (strain 104).